The following is a 185-amino-acid chain: Elongation factor P (185 aa).

Belongs to the elongation factor P family.

It is found in the cytoplasm. The protein operates within protein biosynthesis; polypeptide chain elongation. Functionally, involved in peptide bond synthesis. Stimulates efficient translation and peptide-bond synthesis on native or reconstituted 70S ribosomes in vitro. Probably functions indirectly by altering the affinity of the ribosome for aminoacyl-tRNA, thus increasing their reactivity as acceptors for peptidyl transferase. This chain is Elongation factor P, found in Bacillus cereus (strain 03BB102).